The primary structure comprises 466 residues: MSIASVASVFKGEHAVGSKVTVRGWVRTRRDSKAGISFLAVYDGSCFNPIQGVVPNSLENYDNEVLKLTAGCSVVMTGDVVESPGAGQAFELQVTELEVTGWVDDPDTYPMAAKRHSIEHLRELAHLRPRTNIIGAVARVRNCLSQAIHRFYHEEGFIWVSTPLITASDCEGAGEMFRVSTLDMENLPRTSEGKVDYDKDFFGKEAFLTVSGQLNGETYACALSKIYTFGPTFRAENSNTSRHLAEFWMVEPEVAFATLSDIAGLAEAMLKYAFNAVLTERMDDLQFFAQHVDKTVIERLQSFVSSDFAQVDYTDAVDILQKCGKTFEFPVSWGIDLSSEHERYLAEEHFKAPVVVKNYPKDIKAFYMRLNEDGKTVAAMDVLAPGIGEIIGGSQREERLDVLDMRLAEMDLNKEDYWWYRDLRRYGTVPHAGFGLGFERLVSYVTGVSNIRDVIPFPRAPRTANF.

It belongs to the class-II aminoacyl-tRNA synthetase family. As to quaternary structure, homodimer.

It localises to the cytoplasm. The catalysed reaction is tRNA(Asn) + L-asparagine + ATP = L-asparaginyl-tRNA(Asn) + AMP + diphosphate + H(+). This chain is Asparagine--tRNA ligase, found in Shewanella putrefaciens (strain CN-32 / ATCC BAA-453).